The following is a 215-amino-acid chain: Protein slowmo (215 aa).

The PRELI/MSF1 domain occupies 1–170 (MKIWTSEHIF…VIGLINTEVK (170 aa)).

Belongs to the slowmo family. As to expression, expressed in specific tissues such as the developing central nervous system (CNS) and both the male and female germline. In the CNS, it is restricted in a subset of cells during embryogenesis and early larval development. In embryos, it is also expressed in salivary glands. In the testis, expressed in somatic cyst cells throughout the distal region where the mitotic cysts develop, extending through to meiotic cysts.

Its subcellular location is the mitochondrion. Its function is as follows. Required to regulate peristaltic movement and also for germline proliferation in males and females. This chain is Protein slowmo (slmo), found in Drosophila melanogaster (Fruit fly).